Here is a 147-residue protein sequence, read N- to C-terminus: D-aminoacyl-tRNA deacylase (147 aa).

The Gly-cisPro motif, important for rejection of L-amino acids signature appears at 137–138; the sequence is GP.

This sequence belongs to the DTD family. Homodimer.

It is found in the cytoplasm. It carries out the reaction glycyl-tRNA(Ala) + H2O = tRNA(Ala) + glycine + H(+). The enzyme catalyses a D-aminoacyl-tRNA + H2O = a tRNA + a D-alpha-amino acid + H(+). An aminoacyl-tRNA editing enzyme that deacylates mischarged D-aminoacyl-tRNAs. Also deacylates mischarged glycyl-tRNA(Ala), protecting cells against glycine mischarging by AlaRS. Acts via tRNA-based rather than protein-based catalysis; rejects L-amino acids rather than detecting D-amino acids in the active site. By recycling D-aminoacyl-tRNA to D-amino acids and free tRNA molecules, this enzyme counteracts the toxicity associated with the formation of D-aminoacyl-tRNA entities in vivo and helps enforce protein L-homochirality. In Acinetobacter baumannii (strain ACICU), this protein is D-aminoacyl-tRNA deacylase.